A 279-amino-acid polypeptide reads, in one-letter code: Probable endonuclease 4 (279 aa).

H69, H109, E145, D179, H182, H216, D229, H231, and E261 together coordinate Zn(2+).

The protein belongs to the AP endonuclease 2 family. It depends on Zn(2+) as a cofactor.

The enzyme catalyses Endonucleolytic cleavage to 5'-phosphooligonucleotide end-products.. Functionally, endonuclease IV plays a role in DNA repair. It cleaves phosphodiester bonds at apurinic or apyrimidinic (AP) sites, generating a 3'-hydroxyl group and a 5'-terminal sugar phosphate. This is Probable endonuclease 4 from Serratia proteamaculans (strain 568).